We begin with the raw amino-acid sequence, 293 residues long: 4-diphosphocytidyl-2-C-methyl-D-erythritol kinase (293 aa).

Lys10 is a catalytic residue. Position 94–104 (Pro94–Ser104) interacts with ATP. The active site involves Asp136.

The protein belongs to the GHMP kinase family. IspE subfamily.

The enzyme catalyses 4-CDP-2-C-methyl-D-erythritol + ATP = 4-CDP-2-C-methyl-D-erythritol 2-phosphate + ADP + H(+). The protein operates within isoprenoid biosynthesis; isopentenyl diphosphate biosynthesis via DXP pathway; isopentenyl diphosphate from 1-deoxy-D-xylulose 5-phosphate: step 3/6. Its function is as follows. Catalyzes the phosphorylation of the position 2 hydroxy group of 4-diphosphocytidyl-2C-methyl-D-erythritol. In Listeria monocytogenes serotype 4b (strain CLIP80459), this protein is 4-diphosphocytidyl-2-C-methyl-D-erythritol kinase.